The chain runs to 260 residues: Probable 6-oxopurine nucleoside phosphorylase (260 aa).

Phosphate contacts are provided by residues S9 and 49-50; that span reads RH. M182 is a substrate binding site. A phosphate-binding site is contributed by T183. Residue 206 to 208 participates in substrate binding; that stretch reads NMA.

This sequence belongs to the PNP/MTAP phosphorylase family. MTAP subfamily. In terms of assembly, homohexamer. Dimer of a homotrimer.

The catalysed reaction is a purine D-ribonucleoside + phosphate = a purine nucleobase + alpha-D-ribose 1-phosphate. It participates in purine metabolism; purine nucleoside salvage. Purine nucleoside phosphorylase which is highly specific for 6-oxopurine nucleosides. Cleaves guanosine or inosine to respective bases and sugar-1-phosphate molecules. Involved in purine salvage. This is Probable 6-oxopurine nucleoside phosphorylase from Moorella thermoacetica (strain ATCC 39073 / JCM 9320).